A 290-amino-acid polypeptide reads, in one-letter code: Protein-lysine methyltransferase METTL21E (290 aa).

S-adenosyl-L-methionine-binding positions include Trp96, 124–126, Asp145, Trp176, and Ala197; that span reads GAG.

It belongs to the methyltransferase superfamily. METTL21 family.

Functionally, protein-lysine methyltransferase. The sequence is that of Protein-lysine methyltransferase METTL21E (METTL21E) from Bos taurus (Bovine).